The primary structure comprises 513 residues: Maturase K (513 aa).

The protein belongs to the intron maturase 2 family. MatK subfamily.

It is found in the plastid. Its subcellular location is the chloroplast. Usually encoded in the trnK tRNA gene intron. Probably assists in splicing its own and other chloroplast group II introns. The chain is Maturase K from Sporobolus indicus (Smut grass).